A 410-amino-acid polypeptide reads, in one-letter code: WD repeat and FYVE domain-containing protein 1 (410 aa).

WD repeat units lie at residues 22-61, 66-105, 112-150, 153-192, 197-236, and 240-279; these read GHQD…QYWP, TMAS…NKMN, AHQN…NMLG, FFSS…CSVI, GHEG…GRTL, and GHHD…EEAP. The FYVE-type zinc finger occupies 281 to 352; that stretch reads WLESDSCQKC…VCDSCYDSIK (72 aa). Zn(2+) is bound by residues cysteine 287, cysteine 290, cysteine 314, cysteine 317, cysteine 322, cysteine 325, cysteine 344, and cysteine 347. Residues 364–403 form a WD 7 repeat; sequence EGKHNISHMSMDVARGLMVTCGTDRVVKIWDMTPVVGCSL. Serine 408 is subject to Phosphoserine.

As to quaternary structure, binds PtdIns3P in vitro with high specificity over other phosphoinositides. Interacts (via WD repeat 2) with tyrosine-phosphorylated TLR3 (via TIR domain) in response to poly(I:C). Interacts with TLR4 in response to LPS. Interacts with TICAM1 in response to poly(I:C).

It localises to the early endosome. Its function is as follows. Positively regulates TLR3- and TLR4-mediated signaling pathways by bridging the interaction between TLR3 or TLR4 and TICAM1. Promotes TLR3/4 ligand-induced activation of transcription factors IRF3 and NF-kappa-B, as well as the production of IFN-beta and inflammatory cytokines. This Bos taurus (Bovine) protein is WD repeat and FYVE domain-containing protein 1 (WDFY1).